The chain runs to 601 residues: Elongation factor 4 (601 aa).

The tr-type G domain occupies 2-184; that stretch reads DLIRNFSIIA…EMIARVPPPT (183 aa). GTP is bound by residues 14-19 and 131-134; these read DHGKST and NKID.

This sequence belongs to the TRAFAC class translation factor GTPase superfamily. Classic translation factor GTPase family. LepA subfamily.

The protein resides in the cell inner membrane. The enzyme catalyses GTP + H2O = GDP + phosphate + H(+). Functionally, required for accurate and efficient protein synthesis under certain stress conditions. May act as a fidelity factor of the translation reaction, by catalyzing a one-codon backward translocation of tRNAs on improperly translocated ribosomes. Back-translocation proceeds from a post-translocation (POST) complex to a pre-translocation (PRE) complex, thus giving elongation factor G a second chance to translocate the tRNAs correctly. Binds to ribosomes in a GTP-dependent manner. This Polynucleobacter necessarius subsp. necessarius (strain STIR1) protein is Elongation factor 4.